Here is a 201-residue protein sequence, read N- to C-terminus: Holliday junction branch migration complex subunit RuvA (201 aa).

Residues 1-64 (MIGFIRGLLV…EDAHSLFGFG (64 aa)) are domain I. Positions 65–143 (TEAERGLFRS…IGVPSLAPAS (79 aa)) are domain II. The interval 144–153 (FAGGAAPLPA) is flexible linker. The tract at residues 153–201 (AADPADEAVSALIALGFKPQEANTLVARQAAEGRSAEDLIRAALQSAVR) is domain III.

This sequence belongs to the RuvA family. Homotetramer. Forms an RuvA(8)-RuvB(12)-Holliday junction (HJ) complex. HJ DNA is sandwiched between 2 RuvA tetramers; dsDNA enters through RuvA and exits via RuvB. An RuvB hexamer assembles on each DNA strand where it exits the tetramer. Each RuvB hexamer is contacted by two RuvA subunits (via domain III) on 2 adjacent RuvB subunits; this complex drives branch migration. In the full resolvosome a probable DNA-RuvA(4)-RuvB(12)-RuvC(2) complex forms which resolves the HJ.

It is found in the cytoplasm. The RuvA-RuvB-RuvC complex processes Holliday junction (HJ) DNA during genetic recombination and DNA repair, while the RuvA-RuvB complex plays an important role in the rescue of blocked DNA replication forks via replication fork reversal (RFR). RuvA specifically binds to HJ cruciform DNA, conferring on it an open structure. The RuvB hexamer acts as an ATP-dependent pump, pulling dsDNA into and through the RuvAB complex. HJ branch migration allows RuvC to scan DNA until it finds its consensus sequence, where it cleaves and resolves the cruciform DNA. This chain is Holliday junction branch migration complex subunit RuvA, found in Methylococcus capsulatus (strain ATCC 33009 / NCIMB 11132 / Bath).